The sequence spans 366 residues: N-acetyl-L-citrulline deacetylase (366 aa).

Co(2+)-binding residues include histidine 72 and aspartate 103. Glutamate 130 (proton donor/acceptor) is an active-site residue. Position 155 (glutamate 155) interacts with Co(2+).

This sequence belongs to the peptidase M20A family. N-acetylcitrulline deacetylase subfamily. Forms homodimers in the crystal, but higher order oligomers may form in solution. The cofactor is Co(2+).

The enzyme catalyses N(2)-acetyl-L-citrulline + H2O = L-citrulline + acetate. The catalysed reaction is N(2)-acetyl-L-ornithine + H2O = L-ornithine + acetate. The protein operates within amino-acid biosynthesis; L-arginine biosynthesis. Its function is as follows. Catalyzes the deacetylation of N-acetyl-L-citrulline to produce L-citrulline. This is a step in an alternative arginine biosynthesis pathway. Is also able to catalyze the deacetylation of N-acetylornithine in vitro, with almost equal velocity. However, this reaction may be not relevant in vivo since Xanthomonas does not possess the canonical argF gene and cannot convert ornithine to citrulline via ArgF'. This chain is N-acetyl-L-citrulline deacetylase, found in Xanthomonas campestris pv. campestris (strain ATCC 33913 / DSM 3586 / NCPPB 528 / LMG 568 / P 25).